We begin with the raw amino-acid sequence, 340 residues long: Phospho-N-acetylmuramoyl-pentapeptide-transferase (340 aa).

9 helical membrane-spanning segments follow: residues 24–44 (VPFG…LPVL), 69–89 (TMGG…GSGW), 95–115 (AVAL…WLVI), 129–149 (LLLQ…QGIP), 156–176 (GIGA…VLVG), 196–216 (ALVL…LVAF), 235–255 (LFMG…LALL), 260–280 (WALA…ILQV), and 316–336 (VVGC…AWWH).

This sequence belongs to the glycosyltransferase 4 family. MraY subfamily. Requires Mg(2+) as cofactor.

It is found in the cell inner membrane. It carries out the reaction UDP-N-acetyl-alpha-D-muramoyl-L-alanyl-gamma-D-glutamyl-meso-2,6-diaminopimeloyl-D-alanyl-D-alanine + di-trans,octa-cis-undecaprenyl phosphate = di-trans,octa-cis-undecaprenyl diphospho-N-acetyl-alpha-D-muramoyl-L-alanyl-D-glutamyl-meso-2,6-diaminopimeloyl-D-alanyl-D-alanine + UMP. The protein operates within cell wall biogenesis; peptidoglycan biosynthesis. Its function is as follows. Catalyzes the initial step of the lipid cycle reactions in the biosynthesis of the cell wall peptidoglycan: transfers peptidoglycan precursor phospho-MurNAc-pentapeptide from UDP-MurNAc-pentapeptide onto the lipid carrier undecaprenyl phosphate, yielding undecaprenyl-pyrophosphoryl-MurNAc-pentapeptide, known as lipid I. This Synechococcus sp. (strain JA-3-3Ab) (Cyanobacteria bacterium Yellowstone A-Prime) protein is Phospho-N-acetylmuramoyl-pentapeptide-transferase.